A 121-amino-acid polypeptide reads, in one-letter code: Ribonuclease P protein component (121 aa).

This sequence belongs to the RnpA family. In terms of assembly, consists of a catalytic RNA component (M1 or rnpB) and a protein subunit.

It catalyses the reaction Endonucleolytic cleavage of RNA, removing 5'-extranucleotides from tRNA precursor.. Its function is as follows. RNaseP catalyzes the removal of the 5'-leader sequence from pre-tRNA to produce the mature 5'-terminus. It can also cleave other RNA substrates such as 4.5S RNA. The protein component plays an auxiliary but essential role in vivo by binding to the 5'-leader sequence and broadening the substrate specificity of the ribozyme. The polypeptide is Ribonuclease P protein component (Bifidobacterium adolescentis (strain ATCC 15703 / DSM 20083 / NCTC 11814 / E194a)).